Here is a 156-residue protein sequence, read N- to C-terminus: Small ribosomal subunit protein uS7 (156 aa).

This sequence belongs to the universal ribosomal protein uS7 family. In terms of assembly, part of the 30S ribosomal subunit. Contacts proteins S9 and S11.

Its function is as follows. One of the primary rRNA binding proteins, it binds directly to 16S rRNA where it nucleates assembly of the head domain of the 30S subunit. Is located at the subunit interface close to the decoding center, probably blocks exit of the E-site tRNA. In Mesorhizobium japonicum (strain LMG 29417 / CECT 9101 / MAFF 303099) (Mesorhizobium loti (strain MAFF 303099)), this protein is Small ribosomal subunit protein uS7.